The chain runs to 142 residues: Acidic phospholipase A2 Bc-PL (142 aa).

The N-terminal stretch at 1-9 (AVCVSLLGA) is a signal peptide. Positions 10–17 (ANIPPQPL) are excised as a propeptide. 7 disulfide bridges follow: cysteine 28/cysteine 94, cysteine 44/cysteine 141, cysteine 46/cysteine 62, cysteine 61/cysteine 122, cysteine 68/cysteine 115, cysteine 78/cysteine 108, and cysteine 101/cysteine 113. Ca(2+)-binding residues include tyrosine 45, glycine 47, and glycine 49. Histidine 65 is a catalytic residue. Ca(2+) is bound at residue aspartate 66. Aspartate 116 is a catalytic residue.

It belongs to the phospholipase A2 family. Group I subfamily. D49 sub-subfamily. It depends on Ca(2+) as a cofactor. In terms of tissue distribution, expressed by the venom gland.

Its subcellular location is the secreted. The enzyme catalyses a 1,2-diacyl-sn-glycero-3-phosphocholine + H2O = a 1-acyl-sn-glycero-3-phosphocholine + a fatty acid + H(+). In terms of biological role, PLA2 catalyzes the calcium-dependent hydrolysis of the 2-acyl groups in 3-sn-phosphoglycerides. This Bungarus candidus (Malayan krait) protein is Acidic phospholipase A2 Bc-PL.